We begin with the raw amino-acid sequence, 129 residues long: Cytochrome c' (129 aa).

Heme c is bound by residues R12, Q13, T69, E70, C119, C122, and H123.

Post-translationally, binds 1 heme c group covalently per subunit.

Its function is as follows. Cytochrome c' is the most widely occurring bacterial c-type cytochrome. Cytochromes c' are high-spin proteins and the heme has no sixth ligand. Their exact function is not known. The protein is Cytochrome c' of Rubrivivax gelatinosus (Rhodocyclus gelatinosus).